Consider the following 316-residue polypeptide: Melanocyte-stimulating hormone receptor (316 aa).

Over 1–37 (MPMQGAHRKLLGSLNSTPTATSNLGLAANHTGAPCLE) the chain is Extracellular. Asn-29 is a glycosylation site (N-linked (GlcNAc...) asparagine). Residues 38 to 63 (VSIPDGLFLSLGLVSLVENVLVVAAI) traverse the membrane as a helical segment. Residues 64–72 (AKNRNLHSS) are Cytoplasmic-facing. The helical transmembrane segment at 73-93 (MYCFICCLALSDLLVSGSNML) threads the bilayer. Over 94-118 (ETAVILLLEAGALATRTSVVQQLHN) the chain is Extracellular. A helical membrane pass occupies residues 119 to 140 (TIDVLTCSSMLCSLCFLGAIAV). Residues 141–163 (DRYISIFYALRYHSIMTLPRAQR) lie on the Cytoplasmic side of the membrane. A helical membrane pass occupies residues 164 to 183 (AIAAIWVASVLSSTLFITYY). Residues 184 to 191 (DHAAVLLC) lie on the Extracellular side of the membrane. A helical transmembrane segment spans residues 192–211 (LVVFFLAMLVLMAVLYVHML). The Cytoplasmic portion of the chain corresponds to 212-240 (ARACQHAHGIIRLHKRQSPAHQGFGLRGA). Residues 241 to 266 (ATLTILLGIFFLCWGPFFLHLTLVVF) traverse the membrane as a helical segment. At 267–279 (CPQHLTCSCIFKN) the chain is on the extracellular side. Residues 280–300 (FKVFLTLIICNTIIDPLIYAF) form a helical membrane-spanning segment. The Cytoplasmic portion of the chain corresponds to 301-316 (RSQELRRTLKEVLCSW). Cys-314 is lipidated: S-palmitoyl cysteine.

This sequence belongs to the G-protein coupled receptor 1 family. As to quaternary structure, interacts with MGRN1, but does not undergo MGRN1-mediated ubiquitination; this interaction competes with GNAS-binding and thus inhibits agonist-induced cAMP production. Interacts with OPN3; the interaction results in a decrease in MC1R-mediated cAMP signaling and ultimately a decrease in melanin production in melanocytes.

It localises to the cell membrane. Its function is as follows. Receptor for MSH (alpha, beta and gamma) and ACTH. The activity of this receptor is mediated by G proteins which activate adenylate cyclase. Mediates melanogenesis, the production of eumelanin (black/brown) and phaeomelanin (red/yellow), via regulation of cAMP signaling in melanocytes. This is Melanocyte-stimulating hormone receptor (MC1R) from Leontocebus fuscicollis (Brown-mantled tamarin).